The primary structure comprises 231 residues: 5'-methylthioadenosine/S-adenosylhomocysteine nucleosidase (231 aa).

The Proton acceptor role is filled by glutamate 12. Residues glycine 78, valine 153, and methionine 174 to glutamate 175 each bind substrate. The active-site Proton donor is aspartate 198.

It belongs to the PNP/UDP phosphorylase family. MtnN subfamily.

It catalyses the reaction S-adenosyl-L-homocysteine + H2O = S-(5-deoxy-D-ribos-5-yl)-L-homocysteine + adenine. It carries out the reaction S-methyl-5'-thioadenosine + H2O = 5-(methylsulfanyl)-D-ribose + adenine. The enzyme catalyses 5'-deoxyadenosine + H2O = 5-deoxy-D-ribose + adenine. It participates in amino-acid biosynthesis; L-methionine biosynthesis via salvage pathway; S-methyl-5-thio-alpha-D-ribose 1-phosphate from S-methyl-5'-thioadenosine (hydrolase route): step 1/2. Catalyzes the irreversible cleavage of the glycosidic bond in both 5'-methylthioadenosine (MTA) and S-adenosylhomocysteine (SAH/AdoHcy) to adenine and the corresponding thioribose, 5'-methylthioribose and S-ribosylhomocysteine, respectively. Also cleaves 5'-deoxyadenosine, a toxic by-product of radical S-adenosylmethionine (SAM) enzymes, into 5-deoxyribose and adenine. This Aliivibrio fischeri (Vibrio fischeri) protein is 5'-methylthioadenosine/S-adenosylhomocysteine nucleosidase.